Here is an 82-residue protein sequence, read N- to C-terminus: RNA-binding protein Hfq (82 aa).

Residues 11 to 71 enclose the Sm domain; the sequence is DTFLNHVRKT…ISTIMPGAPI (61 aa).

The protein belongs to the Hfq family. Homohexamer.

Its function is as follows. RNA chaperone that binds small regulatory RNA (sRNAs) and mRNAs to facilitate mRNA translational regulation in response to envelope stress, environmental stress and changes in metabolite concentrations. Also binds with high specificity to tRNAs. This Rhodopseudomonas palustris (strain HaA2) protein is RNA-binding protein Hfq.